A 708-amino-acid chain; its full sequence is Matrix metalloproteinase-9 (708 aa).

The first 19 residues, 1-19, serve as a signal peptide directing secretion; that stretch reads MSPWQPLLLVLLALGYSFA. The propeptide at 20 to 107 is activation peptide; that stretch reads APHQRQPTYV…PRCGVPDVGK (88 aa). An N-linked (GlcNAc...) asparagine glycan is attached at Asn-39. Residues 98–105 carry the Cysteine switch motif; it reads PRCGVPDV. Position 100 (Cys-100) interacts with Zn(2+). The N-linked (GlcNAc...) asparagine glycan is linked to Asn-121. Residues Asp-132 and Asp-166 each contribute to the Ca(2+) site. Residues His-176 and Asp-178 each coordinate Zn(2+). Asp-183, Gly-184, Asp-186, and Leu-188 together coordinate Ca(2+). Residue His-191 coordinates Zn(2+). Ca(2+) contacts are provided by Gly-198, Gln-200, and Asp-202. Residue His-204 participates in Zn(2+) binding. Ca(2+) is bound by residues Asp-206, Asp-207, and Glu-209. Fibronectin type-II domains are found at residues 226–274, 284–332, and 343–391; these read ANGA…FCPS, GDGK…FCPT, and SAGE…FCPD. Cystine bridges form between Cys-231/Cys-257, Cys-245/Cys-272, Cys-289/Cys-315, Cys-303/Cys-330, Cys-348/Cys-374, and Cys-362/Cys-389. Position 402 (His-402) interacts with Zn(2+). Glu-403 is a catalytic residue. Residues His-406 and His-412 each contribute to the Zn(2+) site. Positions 441-520 are disordered; it reads HHLYGRGSKP…SSTPDDNPCN (80 aa). A compositionally biased stretch (low complexity) spans 480–490; sequence PTGGPTVAPTG. Pro residues predominate over residues 491–502; it reads APSPGPTGPPTA. The cysteines at positions 519 and 707 are disulfide-linked. 4 Hemopexin repeats span residues 521-566, 567-611, 613-660, and 661-707; these read VDVF…WPAF, PSKL…GLGS, VTLV…FSGV, and PWNS…LLQC.

Belongs to the peptidase M10A family. In terms of assembly, exists as monomer or homodimer; disulfide-linked. Also exists as heterodimer with LCN2. Macrophages and transformed cell lines produce only the monomeric form. Interacts with ECM1. The cofactor is Zn(2+). Ca(2+) is required as a cofactor. Post-translationally, N- and O-glycosylated.

The protein localises to the secreted. It is found in the extracellular space. Its subcellular location is the extracellular matrix. The catalysed reaction is Cleavage of gelatin types I and V and collagen types IV and V.. Functionally, matrix metalloproteinase that plays an essential role in local proteolysis of the extracellular matrix and in leukocyte migration. Could play a role in bone osteoclastic resorption. Cleaves KiSS1 at a Gly-|-Leu bond. Cleaves NINJ1 to generate the Secreted ninjurin-1 form. Cleaves type IV and type V collagen into large C-terminal three quarter fragments and shorter N-terminal one quarter fragments. Degrades fibronectin but not laminin or Pz-peptide. The polypeptide is Matrix metalloproteinase-9 (Mmp9) (Rattus norvegicus (Rat)).